Reading from the N-terminus, the 197-residue chain is Xanthine phosphoribosyltransferase (197 aa).

Positions 20 and 27 each coordinate xanthine. 128–132 (ANGQA) contacts 5-phospho-alpha-D-ribose 1-diphosphate. Lys-156 contributes to the xanthine binding site.

It belongs to the purine/pyrimidine phosphoribosyltransferase family. Xpt subfamily. Homodimer.

Its subcellular location is the cytoplasm. It carries out the reaction XMP + diphosphate = xanthine + 5-phospho-alpha-D-ribose 1-diphosphate. It participates in purine metabolism; XMP biosynthesis via salvage pathway; XMP from xanthine: step 1/1. Its function is as follows. Converts the preformed base xanthine, a product of nucleic acid breakdown, to xanthosine 5'-monophosphate (XMP), so it can be reused for RNA or DNA synthesis. This Bacillus anthracis (strain A0248) protein is Xanthine phosphoribosyltransferase.